The following is a 349-amino-acid chain: Transmembrane protein 255A (349 aa).

The next 4 helical transmembrane spans lie at 30-50, 57-77, 89-109, and 226-246; these read IYVT…GLAA, VTVG…LGII, LVAS…CAIV, and TILN…LGGF. The tract at residues 301-329 is disordered; it reads VFPSSPPSGLSDEPQSASPSPSYMWSSSA. The segment covering 316 to 329 has biased composition (low complexity); it reads SASPSPSYMWSSSA.

Belongs to the TMEM255 family.

Its subcellular location is the membrane. This is Transmembrane protein 255A (TMEM255A) from Macaca fascicularis (Crab-eating macaque).